The primary structure comprises 535 residues: Dimethylaniline monooxygenase [N-oxide-forming] 2 (535 aa).

Alanine 2 is modified (N-acetylalanine). FAD contacts are provided by residues glycine 9–serine 13, glutamate 32, leucine 40–tryptophan 41, and asparagine 61–threonine 62. NADP(+)-binding positions include threonine 60 to asparagine 61 and serine 195 to aspartate 198. Lysine 492 is covalently cross-linked (Glycyl lysine isopeptide (Lys-Gly) (interchain with G-Cter in SUMO)). The chain crosses the membrane as a helical span at residues phenylalanine 510–phenylalanine 530.

It belongs to the FMO family. FAD is required as a cofactor. It depends on Mg(2+) as a cofactor. Lung.

It localises to the microsome membrane. It is found in the endoplasmic reticulum membrane. The catalysed reaction is N,N-dimethylaniline + NADPH + O2 + H(+) = N,N-dimethylaniline N-oxide + NADP(+) + H2O. Its function is as follows. Catalyzes the oxidative metabolism of numerous xenobiotics, including mainly therapeutic drugs and insecticides that contain a soft nucleophile, most commonly nitrogen and sulfur and participates to their bioactivation. Most drug substrates are tertiary amines such as prochlorperazine and trifluoperazine which are N-oxygenated to form the N-oxide, or sulfides such as thiourea and ethionamide, which are S-oxygenated to the sulfoxide. Others include primary alkylamines such as N-dodecylamine and octan-1-amine that are sequentially monooxygenated to oximes through intermediate hydroxylamines and both steps are NADPH- and oxygen-dependent. Also metabolized N-Deacetyl ketoconazole (DAK) to N-hydroxy-DAK and appears to further metabolizes N-hydroxy-DAK to two others metabolites. Also catalyzes S-oxygenation of the thioether-containing organophosphate insecticides, phorate and disulfoton. The polypeptide is Dimethylaniline monooxygenase [N-oxide-forming] 2 (Oryctolagus cuniculus (Rabbit)).